A 278-amino-acid chain; its full sequence is MEPQEERETQVAAWLKKIFGDHPIPQYEVNPRTTEILHHLSERNRVRDRDVYLVIEDLKQKASEYESEAKYLQDLLMESVNFSPANLSSTGSRYLNALVDSAVALETKDTSLASFIPAVNDLTSDLFRTKSKSEEIKIELEKLEKNLTATLVLEKCLQEDVKKAELHLSTERAKVDNRRQNMDFLKAKSEEFRFGIKAAEEQLSARGMDASLSHQSLVALSEKLARLKQQTIPLKKKLESYLDLMPNPSLAQVKIEEAKRELDSIEAELTRRVDMMEL.

3 coiled-coil regions span residues 49 to 79 (RDVY…LMES), 124 to 177 (SDLF…KVDN), and 249 to 277 (SLAQ…DMME).

The protein belongs to the HAUS1 family. Component of the HAUS augmin-like complex. The complex interacts with the gamma-tubulin ring complex and this interaction is required for spindle assembly. Associates with microtubules. The interaction with microtubules is strong during mitosis, while it is weak or absent during interphase. It is unclear whether this interaction is direct or indirect. Interacts with EML3 (phosphorylated at 'Thr-881'). Widely expressed. Expressed in pancreas, kidney, skeletal muscle, liver and heart. Weakly expressed in lung, brain and placenta.

It localises to the cytoplasm. The protein resides in the cytoskeleton. Its subcellular location is the microtubule organizing center. It is found in the centrosome. The protein localises to the spindle. It localises to the spindle pole. Functionally, contributes to mitotic spindle assembly, maintenance of centrosome integrity and completion of cytokinesis as part of the HAUS augmin-like complex. The chain is HAUS augmin-like complex subunit 1 (HAUS1) from Homo sapiens (Human).